A 306-amino-acid chain; its full sequence is Porphobilinogen deaminase (306 aa).

Cysteine 240 carries the S-(dipyrrolylmethanemethyl)cysteine modification.

The protein belongs to the HMBS family. As to quaternary structure, monomer. Dipyrromethane is required as a cofactor.

It carries out the reaction 4 porphobilinogen + H2O = hydroxymethylbilane + 4 NH4(+). Its pathway is porphyrin-containing compound metabolism; protoporphyrin-IX biosynthesis; coproporphyrinogen-III from 5-aminolevulinate: step 2/4. Functionally, tetrapolymerization of the monopyrrole PBG into the hydroxymethylbilane pre-uroporphyrinogen in several discrete steps. The polypeptide is Porphobilinogen deaminase (Syntrophomonas wolfei subsp. wolfei (strain DSM 2245B / Goettingen)).